The following is a 682-amino-acid chain: DNA ligase (682 aa).

NAD(+) is bound by residues 42-46 (DAEYD), 91-92 (SL), and E124. K126 acts as the N6-AMP-lysine intermediate in catalysis. Residues R147, E184, K302, and K326 each coordinate NAD(+). Zn(2+) is bound by residues C420, C423, C438, and C444. Positions 603–682 (IADNPLKGKS…QEFIALTGEN (80 aa)) constitute a BRCT domain.

Belongs to the NAD-dependent DNA ligase family. LigA subfamily. Mg(2+) is required as a cofactor. Mn(2+) serves as cofactor.

The enzyme catalyses NAD(+) + (deoxyribonucleotide)n-3'-hydroxyl + 5'-phospho-(deoxyribonucleotide)m = (deoxyribonucleotide)n+m + AMP + beta-nicotinamide D-nucleotide.. Functionally, DNA ligase that catalyzes the formation of phosphodiester linkages between 5'-phosphoryl and 3'-hydroxyl groups in double-stranded DNA using NAD as a coenzyme and as the energy source for the reaction. It is essential for DNA replication and repair of damaged DNA. This Actinobacillus pleuropneumoniae serotype 7 (strain AP76) protein is DNA ligase.